A 297-amino-acid chain; its full sequence is uncharacterized protein (297 aa).

The next 4 helical transmembrane spans lie at 3–23 (DYIY…LYML), 38–58 (VIHI…MPAL), 103–123 (IEGI…TALL), and 128–148 (YVFL…LLAM).

The protein resides in the cell membrane. This is an uncharacterized protein from Bacillus subtilis (strain 168).